Here is an 847-residue protein sequence, read N- to C-terminus: Leucine--tRNA ligase (847 aa).

The 'HIGH' region signature appears at 41 to 51; that stretch reads PYPSGRIHMGH. The short motif at 619 to 623 is the 'KMSKS' region element; the sequence is KMSKS. Lysine 622 is a binding site for ATP.

The protein belongs to the class-I aminoacyl-tRNA synthetase family.

It is found in the cytoplasm. The catalysed reaction is tRNA(Leu) + L-leucine + ATP = L-leucyl-tRNA(Leu) + AMP + diphosphate. This chain is Leucine--tRNA ligase, found in Cereibacter sphaeroides (strain KD131 / KCTC 12085) (Rhodobacter sphaeroides).